The chain runs to 545 residues: CTP synthase (545 aa).

An amidoligase domain region spans residues 1-266; it reads MATNYIFVTG…DDFVCERFRL (266 aa). Ser14 contacts CTP. Ser14 serves as a coordination point for UTP. ATP is bound by residues 15–20 and Asp72; that span reads SLGKGI. Positions 72 and 140 each coordinate Mg(2+). Residues 147–149, 187–192, and Lys223 each bind CTP; these read DIE and KTKPTQ. Residues 187–192 and Lys223 each bind UTP; that span reads KTKPTQ. 239–241 serves as a coordination point for ATP; sequence KDV. Residues 291–542 form the Glutamine amidotransferase type-1 domain; the sequence is TIGMVGKYTE…VKAAYENHKK (252 aa). Gly352 contacts L-glutamine. The active-site Nucleophile; for glutamine hydrolysis is Cys379. Residues 380–383, Glu403, and Arg470 contribute to the L-glutamine site; that span reads LGMQ. Catalysis depends on residues His515 and Glu517.

This sequence belongs to the CTP synthase family. Homotetramer.

The enzyme catalyses UTP + L-glutamine + ATP + H2O = CTP + L-glutamate + ADP + phosphate + 2 H(+). It carries out the reaction L-glutamine + H2O = L-glutamate + NH4(+). It catalyses the reaction UTP + NH4(+) + ATP = CTP + ADP + phosphate + 2 H(+). Its pathway is pyrimidine metabolism; CTP biosynthesis via de novo pathway; CTP from UDP: step 2/2. Its activity is regulated as follows. Allosterically activated by GTP, when glutamine is the substrate; GTP has no effect on the reaction when ammonia is the substrate. The allosteric effector GTP functions by stabilizing the protein conformation that binds the tetrahedral intermediate(s) formed during glutamine hydrolysis. Inhibited by the product CTP, via allosteric rather than competitive inhibition. Its function is as follows. Catalyzes the ATP-dependent amination of UTP to CTP with either L-glutamine or ammonia as the source of nitrogen. Regulates intracellular CTP levels through interactions with the four ribonucleotide triphosphates. The protein is CTP synthase of Haemophilus influenzae (strain PittEE).